The chain runs to 353 residues: Photosystem II protein D1 (353 aa).

Position 2 is an N-acetylthreonine (Thr2). At Thr2 the chain carries Phosphothreonine. Transmembrane regions (helical) follow at residues 29-46 (YIGW…TATS), 118-133 (HFLL…EWEL), and 142-156 (WIAV…AATA). Residue His118 coordinates chlorophyll a. Tyr126 lines the pheophytin a pocket. Positions 170 and 189 each coordinate [CaMn4O5] cluster. A helical transmembrane segment spans residues 197-218 (FHMLGVAGVFGGSLFSAMHGSL). Chlorophyll a is bound at residue His198. A quinone is bound by residues His215 and 264-265 (SF). Position 215 (His215) interacts with Fe cation. Residue His272 participates in Fe cation binding. The helical transmembrane segment at 274–288 (FLAAWPVVGIWFTAL) threads the bilayer. [CaMn4O5] cluster-binding residues include His332, Glu333, Asp342, and Ala344. Residues 345–353 (VVEAPSTNG) constitute a propeptide that is removed on maturation.

Belongs to the reaction center PufL/M/PsbA/D family. As to quaternary structure, PSII is composed of 1 copy each of membrane proteins PsbA, PsbB, PsbC, PsbD, PsbE, PsbF, PsbH, PsbI, PsbJ, PsbK, PsbL, PsbM, PsbT, PsbX, PsbY, PsbZ, Psb30/Ycf12, at least 3 peripheral proteins of the oxygen-evolving complex and a large number of cofactors. It forms dimeric complexes. It depends on The D1/D2 heterodimer binds P680, chlorophylls that are the primary electron donor of PSII, and subsequent electron acceptors. It shares a non-heme iron and each subunit binds pheophytin, quinone, additional chlorophylls, carotenoids and lipids. D1 provides most of the ligands for the Mn4-Ca-O5 cluster of the oxygen-evolving complex (OEC). There is also a Cl(-1) ion associated with D1 and D2, which is required for oxygen evolution. The PSII complex binds additional chlorophylls, carotenoids and specific lipids. as a cofactor. Tyr-161 forms a radical intermediate that is referred to as redox-active TyrZ, YZ or Y-Z. In terms of processing, C-terminally processed by CTPA; processing is essential to allow assembly of the oxygen-evolving complex and thus photosynthetic growth.

It is found in the plastid. The protein localises to the chloroplast thylakoid membrane. It catalyses the reaction 2 a plastoquinone + 4 hnu + 2 H2O = 2 a plastoquinol + O2. Functionally, photosystem II (PSII) is a light-driven water:plastoquinone oxidoreductase that uses light energy to abstract electrons from H(2)O, generating O(2) and a proton gradient subsequently used for ATP formation. It consists of a core antenna complex that captures photons, and an electron transfer chain that converts photonic excitation into a charge separation. The D1/D2 (PsbA/PsbD) reaction center heterodimer binds P680, the primary electron donor of PSII as well as several subsequent electron acceptors. This Aethionema grandiflorum (Persian stone-cress) protein is Photosystem II protein D1.